A 338-amino-acid chain; its full sequence is Methionine import ATP-binding protein MetN 1 (338 aa).

One can recognise an ABC transporter domain in the interval 2-241 (IQLENIEKHY…PNEKLTKDFI (240 aa)). Residue 38–45 (GYSGAGKS) participates in ATP binding.

This sequence belongs to the ABC transporter superfamily. Methionine importer (TC 3.A.1.24) family. The complex is composed of two ATP-binding proteins (MetN), two transmembrane proteins (MetI) and a solute-binding protein (MetQ).

Its subcellular location is the cell membrane. It carries out the reaction L-methionine(out) + ATP + H2O = L-methionine(in) + ADP + phosphate + H(+). The enzyme catalyses D-methionine(out) + ATP + H2O = D-methionine(in) + ADP + phosphate + H(+). Part of the ABC transporter complex MetNIQ involved in methionine import. Responsible for energy coupling to the transport system. In Oceanobacillus iheyensis (strain DSM 14371 / CIP 107618 / JCM 11309 / KCTC 3954 / HTE831), this protein is Methionine import ATP-binding protein MetN 1.